Here is a 1394-residue protein sequence, read N- to C-terminus: Tubulin glycylase 3E (1394 aa).

4 disordered regions span residues 201–230, 563–582, 620–663, and 682–706; these read KKKS…QRKE, NQKD…QNSI, DENE…TSNF, and STVK…NLKE. Positions 205–216 are enriched in low complexity; that stretch reads NFQNKSQSQLNN. Residues 217–230 show a composition bias toward basic and acidic residues; the sequence is HKNEEKKPSQQRKE. Residues 568 to 582 are compositionally biased toward low complexity; the sequence is QSNQTSSVISQQNSI. Residues 627 to 655 are compositionally biased toward polar residues; sequence KENVLQQKKNQSNQIVTSQQQSNNYFKQE. Residues 682 to 703 show a composition bias toward low complexity; it reads STVKNSDNNNQNQTNPQNQNTN. Residues 911-1250 form the TTL domain; the sequence is RFIFNITVIA…QNNLQEDLEI (340 aa). Residues 1058-1061, Lys1079, and Asp1081 contribute to the ATP site; that span reads QKYI. 2 IQ domains span residues 1320–1349 and 1348–1377; these read QYWG…QKFT and FTFA…QQQT.

The protein resides in the cell projection. It is found in the cilium. The protein localises to the cytoplasm. It localises to the cytoskeleton. Its subcellular location is the cilium axoneme. Its function is as follows. Probable glycylase which modifies tubulin, generating side chains of glycine on the gamma-carboxyl groups of specific glutamate residues within the C-terminal tail of tubulin. The polypeptide is Tubulin glycylase 3E (TTLL3E) (Tetrahymena thermophila (strain SB210)).